We begin with the raw amino-acid sequence, 382 residues long: Neuropeptide Y receptor type 1 (382 aa).

Over 1–33 (MNSTSFSQVENHSIFCNFSENSQFLAFESDDCH) the chain is Extracellular. N-linked (GlcNAc...) asparagine glycosylation is found at Asn-2, Asn-11, and Asn-17. A helical membrane pass occupies residues 34 to 54 (LPLAMIFTLALAYGAVIILGV). At 55–75 (TGNLALIMIILKQKEMRNVTN) the chain is on the cytoplasmic side. The helical transmembrane segment at 76–96 (ILIVNLSFSDLLVAIMCLPFT) threads the bilayer. Residues 97 to 115 (FVYTLMDHWVFGEAMCKLN) are Extracellular-facing. A disulfide bond links Cys-112 and Cys-197. A helical membrane pass occupies residues 116–136 (PFVQCVSITVSIFSLVLIAVE). Topologically, residues 137 to 153 (RHQLIINPRGWRPNNRH) are cytoplasmic. Residues 154 to 174 (AYVGIAVIWVLAVVSSLPFLI) traverse the membrane as a helical segment. The Extracellular segment spans residues 175-210 (YQVLTDEPFQNVTLDAFKDKYVCFDKFPSDSHRLSY). Asn-185 is a glycosylation site (N-linked (GlcNAc...) asparagine). A helical membrane pass occupies residues 211–231 (TTLLLMLQYFGPLCFIFICYF). At 232 to 259 (KIYIRLKRRNNMMDKMRDNKYRSSETKR) the chain is on the cytoplasmic side. Residues 260-280 (INIMLLSIVVAFAVCWLPLTI) form a helical membrane-spanning segment. Topologically, residues 281–298 (FNTVFDWNHQIIATCNHN) are extracellular. A helical transmembrane segment spans residues 299 to 319 (LLFLLCHLTAMISTCVNPIFY). The Cytoplasmic segment spans residues 320–382 (GFLNKNFQRD…KINNDDNEKI (63 aa)). The S-palmitoyl cysteine moiety is linked to residue Cys-337. Ser-367 carries the phosphoserine modification.

This sequence belongs to the G-protein coupled receptor 1 family.

Its subcellular location is the cell membrane. Functionally, receptor for neuropeptide Y and peptide YY. The chain is Neuropeptide Y receptor type 1 (NPY1R) from Canis lupus familiaris (Dog).